A 309-amino-acid chain; its full sequence is Homoserine kinase (309 aa).

91–101 (PIGSGLGSSAC) contacts ATP.

The protein belongs to the GHMP kinase family. Homoserine kinase subfamily.

It is found in the cytoplasm. It catalyses the reaction L-homoserine + ATP = O-phospho-L-homoserine + ADP + H(+). Its pathway is amino-acid biosynthesis; L-threonine biosynthesis; L-threonine from L-aspartate: step 4/5. Catalyzes the ATP-dependent phosphorylation of L-homoserine to L-homoserine phosphate. This is Homoserine kinase from Erwinia tasmaniensis (strain DSM 17950 / CFBP 7177 / CIP 109463 / NCPPB 4357 / Et1/99).